The chain runs to 147 residues: MRLHDLKPAEGSTKKKKRVGRGIGSGHGKTSGRGHKGQNARSGGGVRPGFEGGQMPLTRRIPKRGFTNIFKKEYAIVNVGTLEERFEDGAEITPEVLIEKGIIKDVKDGVKILGDGELTKKLTVKAHKFSQSAVEKIQAVGGKAEVI.

Residues 1 to 58 form a disordered region; sequence MRLHDLKPAEGSTKKKKRVGRGIGSGHGKTSGRGHKGQNARSGGGVRPGFEGGQMPLT. The segment covering 42-52 has biased composition (gly residues); it reads SGGGVRPGFEG.

This sequence belongs to the universal ribosomal protein uL15 family. In terms of assembly, part of the 50S ribosomal subunit.

Binds to the 23S rRNA. This is Large ribosomal subunit protein uL15 from Caldanaerobacter subterraneus subsp. tengcongensis (strain DSM 15242 / JCM 11007 / NBRC 100824 / MB4) (Thermoanaerobacter tengcongensis).